The following is a 55-amino-acid chain: Photosystem I reaction center subunit IX (55 aa).

The chain crosses the membrane as a helical span at residues 7–27 (YLSVAPVLSTLWFGSLAGLLI).

It belongs to the PsaJ family.

The protein resides in the plastid. It localises to the chloroplast thylakoid membrane. Its function is as follows. May help in the organization of the PsaE and PsaF subunits. The protein is Photosystem I reaction center subunit IX of Gossypium barbadense (Sea Island cotton).